Reading from the N-terminus, the 133-residue chain is DNA-directed RNA polymerase subunit omega (133 aa).

The protein belongs to the RNA polymerase subunit omega family. The RNAP catalytic core consists of 2 alpha, 1 beta, 1 beta' and 1 omega subunit. When a sigma factor is associated with the core the holoenzyme is formed, which can initiate transcription.

The enzyme catalyses RNA(n) + a ribonucleoside 5'-triphosphate = RNA(n+1) + diphosphate. Its function is as follows. Promotes RNA polymerase assembly. Latches the N- and C-terminal regions of the beta' subunit thereby facilitating its interaction with the beta and alpha subunits. This chain is DNA-directed RNA polymerase subunit omega, found in Brucella abortus (strain S19).